The chain runs to 544 residues: Chaperonin GroEL (544 aa).

ATP is bound by residues 29 to 32 (TLGP), Lys50, 86 to 90 (DGTTT), Gly414, 479 to 481 (DAA), and Asp495.

It belongs to the chaperonin (HSP60) family. As to quaternary structure, forms a cylinder of 14 subunits composed of two heptameric rings stacked back-to-back. Interacts with the co-chaperonin GroES.

It localises to the cytoplasm. The catalysed reaction is ATP + H2O + a folded polypeptide = ADP + phosphate + an unfolded polypeptide.. Functionally, together with its co-chaperonin GroES, plays an essential role in assisting protein folding. The GroEL-GroES system forms a nano-cage that allows encapsulation of the non-native substrate proteins and provides a physical environment optimized to promote and accelerate protein folding. The protein is Chaperonin GroEL of Treponema denticola (strain ATCC 35405 / DSM 14222 / CIP 103919 / JCM 8153 / KCTC 15104).